The following is a 297-amino-acid chain: MLRIGSHVSMSGKHMLLAASQEAVSYGANTFMIYTGAPQNTRRKKIEDLNIEAGRAHMQENGIDEIIVHAPYIINIGNTTNPSTFELGVDFLRSEIERTAAIGAKQIVLHPGAHVGAGAEAGIKKIIEGLNEVIDPNQNVQIALETMAGKGSECGRSFEELAQIIEGVTHNEQLSVCFDTCHTHDAGYNIVEDFDGVLNEFDKIIGIDRIKVLHINDSKNVKGARKDRHENIGFGEIGFDALQYVVHHEQLKDIPKILETPYVGEDKKNKKPPYRFEIEMLKEKQFDDTLLEKILQQ.

Zn(2+)-binding residues include H69, H110, E145, D179, H182, H214, D227, H229, and E259.

The protein belongs to the AP endonuclease 2 family. The cofactor is Zn(2+).

The catalysed reaction is Endonucleolytic cleavage to 5'-phosphooligonucleotide end-products.. Functionally, endonuclease IV plays a role in DNA repair. It cleaves phosphodiester bonds at apurinic or apyrimidinic (AP) sites, generating a 3'-hydroxyl group and a 5'-terminal sugar phosphate. This is Probable endonuclease 4 from Bacillus subtilis (strain 168).